We begin with the raw amino-acid sequence, 654 residues long: Coiled-coil domain-containing protein 81 (654 aa).

Residues S196–K270 are disordered. S206 is modified (phosphoserine). Composition is skewed to basic and acidic residues over residues R212–T222 and G232–A251. Residues S273, S275, S296, and S419 each carry the phosphoserine modification. Residues E293–R302 show a composition bias toward polar residues. The tract at residues E293–D318 is disordered. Residues S431–R562 are a coiled coil.

It localises to the cytoplasm. It is found in the cytoskeleton. Its subcellular location is the microtubule organizing center. The protein resides in the centrosome. The sequence is that of Coiled-coil domain-containing protein 81 (Ccdc81) from Mus musculus (Mouse).